A 335-amino-acid polypeptide reads, in one-letter code: Protein-arginine kinase (335 aa).

Residues 21–244 (IVMSSRIRLA…NQIIHEEKQI (224 aa)) form the Phosphagen kinase C-terminal domain. Residues 24 to 28 (SSRIR), His-82, Arg-115, 166 to 170 (RASVM), and 197 to 202 (RGIYGE) contribute to the ATP site.

Belongs to the ATP:guanido phosphotransferase family.

It carries out the reaction L-arginyl-[protein] + ATP = N(omega)-phospho-L-arginyl-[protein] + ADP + H(+). Its function is as follows. Catalyzes the specific phosphorylation of arginine residues in proteins. The protein is Protein-arginine kinase of Staphylococcus aureus (strain USA300).